Here is a 322-residue protein sequence, read N- to C-terminus: Phospholipase A1 (322 aa).

Positions 1-18 (MNFKYSILFICFGTLDRG) are cleaved as a signal peptide. A disulfide bridge connects residues Cys-23 and Cys-106. Ser-156 (nucleophile) is an active-site residue. The Charge relay system role is filled by Asp-184. Intrachain disulfides connect Cys-195–Cys-200 and Cys-238–Cys-246. His-248 serves as the catalytic Charge relay system. Disulfide bonds link Cys-263–Cys-290, Cys-264–Cys-315, and Cys-283–Cys-288.

This sequence belongs to the AB hydrolase superfamily. Lipase family. In terms of processing, contains six disulfide bonds. Post-translationally, is not glycosylated. In terms of tissue distribution, expressed by the venom gland.

The protein localises to the secreted. The enzyme catalyses a 1,2-diacyl-sn-glycero-3-phosphocholine + H2O = a 2-acyl-sn-glycero-3-phosphocholine + a fatty acid + H(+). Functionally, catalyzes the hydrolysis of phosphatidylcholine with phospholipase A1 activity. Shows hemolytic activity. Acts as an allergen. The polypeptide is Phospholipase A1 (Polybia paulista (Neotropical social wasp)).